The following is a 419-amino-acid chain: UDP-N-acetylglucosamine 1-carboxyvinyltransferase (419 aa).

Residue 22 to 23 coordinates phosphoenolpyruvate; it reads KN. Arg91 contributes to the UDP-N-acetyl-alpha-D-glucosamine binding site. Cys115 serves as the catalytic Proton donor. At Cys115 the chain carries 2-(S-cysteinyl)pyruvic acid O-phosphothioketal. Residues 120–124, 160–163, Asp305, and Val327 each bind UDP-N-acetyl-alpha-D-glucosamine; these read RPVDL and KVSV.

It belongs to the EPSP synthase family. MurA subfamily.

The protein resides in the cytoplasm. The catalysed reaction is phosphoenolpyruvate + UDP-N-acetyl-alpha-D-glucosamine = UDP-N-acetyl-3-O-(1-carboxyvinyl)-alpha-D-glucosamine + phosphate. It participates in cell wall biogenesis; peptidoglycan biosynthesis. Functionally, cell wall formation. Adds enolpyruvyl to UDP-N-acetylglucosamine. In Escherichia coli O157:H7, this protein is UDP-N-acetylglucosamine 1-carboxyvinyltransferase.